A 983-amino-acid polypeptide reads, in one-letter code: Protein translocase subunit SecA (983 aa).

ATP contacts are provided by residues Q83, 101–105, and D489; that span reads GEGKT. Residues 948–983 form a disordered region; sequence ISSEEEDNNEKTNINNNEDLERTKGEAQQTAKNPNE. The segment covering 973–983 has biased composition (polar residues); sequence EAQQTAKNPNE.

It belongs to the SecA family. In terms of assembly, monomer and homodimer. Part of the essential Sec protein translocation apparatus which comprises SecA, SecYEG and auxiliary proteins SecDF. Other proteins may also be involved.

It is found in the cell membrane. The protein resides in the cytoplasm. It carries out the reaction ATP + H2O + cellular proteinSide 1 = ADP + phosphate + cellular proteinSide 2.. Functionally, part of the Sec protein translocase complex. Interacts with the SecYEG preprotein conducting channel. Has a central role in coupling the hydrolysis of ATP to the transfer of proteins into and across the cell membrane, serving as an ATP-driven molecular motor driving the stepwise translocation of polypeptide chains across the membrane. This is Protein translocase subunit SecA from Mesomycoplasma hyopneumoniae (strain J / ATCC 25934 / NCTC 10110) (Mycoplasma hyopneumoniae).